A 354-amino-acid chain; its full sequence is Biotin synthase (354 aa).

The 225-residue stretch at N41–S265 folds into the Radical SAM core domain. 3 residues coordinate [4Fe-4S] cluster: C56, C60, and C63. C100, C131, C191, and R263 together coordinate [2Fe-2S] cluster.

The protein belongs to the radical SAM superfamily. Biotin synthase family. In terms of assembly, homodimer. The cofactor is [4Fe-4S] cluster. Requires [2Fe-2S] cluster as cofactor.

The enzyme catalyses (4R,5S)-dethiobiotin + (sulfur carrier)-SH + 2 reduced [2Fe-2S]-[ferredoxin] + 2 S-adenosyl-L-methionine = (sulfur carrier)-H + biotin + 2 5'-deoxyadenosine + 2 L-methionine + 2 oxidized [2Fe-2S]-[ferredoxin]. It participates in cofactor biosynthesis; biotin biosynthesis; biotin from 7,8-diaminononanoate: step 2/2. In terms of biological role, catalyzes the conversion of dethiobiotin (DTB) to biotin by the insertion of a sulfur atom into dethiobiotin via a radical-based mechanism. This Shewanella woodyi (strain ATCC 51908 / MS32) protein is Biotin synthase.